A 497-amino-acid polypeptide reads, in one-letter code: Cytochrome P450 98A8 (497 aa).

A helical membrane pass occupies residues 2–19 (IIYLISLLPIIVATLMLY). C431 lines the heme pocket.

It belongs to the cytochrome P450 family. Heme is required as a cofactor. As to expression, strongly expressed in inflorescence tips, young flower buds, seeds, stamen, tapetum and pollen.

It is found in the membrane. In terms of biological role, acts redundantly with CYP98A9 as tricoumaroylspermidine meta-hydroxylase. Also catalyzes the meta-hydroxylation of the three triferuloylspermidine phenolic rings. Unable to use 5-O-(4-coumaroyl) D-quinate or 5-O-(4-coumaroyl) shikimate as substrates. The sequence is that of Cytochrome P450 98A8 (CYP98A8) from Arabidopsis thaliana (Mouse-ear cress).